A 358-amino-acid polypeptide reads, in one-letter code: Protein RecA (358 aa).

78–85 (GPESGGKT) is an ATP binding site.

This sequence belongs to the RecA family.

The protein resides in the cytoplasm. In terms of biological role, can catalyze the hydrolysis of ATP in the presence of single-stranded DNA, the ATP-dependent uptake of single-stranded DNA by duplex DNA, and the ATP-dependent hybridization of homologous single-stranded DNAs. It interacts with LexA causing its activation and leading to its autocatalytic cleavage. This Deinococcus geothermalis (strain DSM 11300 / CIP 105573 / AG-3a) protein is Protein RecA.